The following is a 589-amino-acid chain: Delta-like protein 3 (589 aa).

The signal sequence occupies residues 1–32 (MVSLQVSSLPQTLILAFLLPQALPAGVFELQI). Residues 33 to 494 (HSFGPGPGPG…LRQADSQRFL (462 aa)) lie on the Extracellular side of the membrane. The DSL domain occupies 174-213 (ARCEPPAVGAACARLCRSRSAPSRCGPGLRPCTPFPDECE). 6 consecutive EGF-like domains span residues 218–251 (SLTV…PLCT), 276–312 (GPGP…PRCE), 314–353 (SGVT…SNCE), 355–391 (RVDR…PRCE), 393–429 (DLDD…RDCR), and 431–467 (RADP…VRCE). 18 disulfides stabilise this stretch: cysteine 222-cysteine 233, cysteine 226-cysteine 239, cysteine 241-cysteine 250, cysteine 280-cysteine 291, cysteine 285-cysteine 300, cysteine 302-cysteine 311, cysteine 318-cysteine 329, cysteine 323-cysteine 341, cysteine 343-cysteine 352, cysteine 359-cysteine 370, cysteine 364-cysteine 379, cysteine 381-cysteine 390, cysteine 397-cysteine 408, cysteine 402-cysteine 417, cysteine 419-cysteine 428, cysteine 435-cysteine 446, cysteine 440-cysteine 455, and cysteine 457-cysteine 466. Residues 495–515 (LPPALGLLAAAALAGAALLLI) traverse the membrane as a helical segment. The Cytoplasmic segment spans residues 516-589 (HVRRRGPGRD…PAPSIYAREA (74 aa)). The tract at residues 552 to 574 (QDGAGDGPTSSADWNHPEDGDSR) is disordered.

Can bind and activate Notch-1 or another Notch receptor. Post-translationally, ubiquitinated by MIB (MIB1 or MIB2), leading to its endocytosis and subsequent degradation.

The protein localises to the membrane. Inhibits primary neurogenesis. May be required to divert neurons along a specific differentiation pathway. Plays a role in the formation of somite boundaries during segmentation of the paraxial mesoderm. The protein is Delta-like protein 3 (Dll3) of Rattus norvegicus (Rat).